The following is a 603-amino-acid chain: Polypeptide N-acetylgalactosaminyltransferase 10 (603 aa).

At methionine 1–alanine 11 the chain is on the cytoplasmic side. A helical; Signal-anchor for type II membrane protein membrane pass occupies residues valine 12 to tyrosine 31. At arginine 32–asparagine 603 the chain is on the lumenal side. 2 N-linked (GlcNAc...) asparagine glycosylation sites follow: asparagine 124 and asparagine 146. Disulfide bonds link cysteine 135-cysteine 365, cysteine 356-cysteine 432, cysteine 471-cysteine 488, cysteine 523-cysteine 538, and cysteine 563-cysteine 578. The interval leucine 144 to arginine 253 is catalytic subdomain A. Substrate-binding residues include aspartate 185 and arginine 214. Aspartate 237 contacts Mn(2+). Residue serine 238 coordinates substrate. Histidine 239 provides a ligand contact to Mn(2+). The tract at residues proline 311 to arginine 373 is catalytic subdomain B. Tryptophan 342 provides a ligand contact to substrate. Residue histidine 370 coordinates Mn(2+). Substrate is bound by residues arginine 373 and tyrosine 378. The segment at arginine 373–valine 384 is flexible loop. Positions alanine 458–glutamate 590 constitute a Ricin B-type lectin domain. Residue asparagine 593 is glycosylated (N-linked (GlcNAc...) asparagine).

This sequence belongs to the glycosyltransferase 2 family. GalNAc-T subfamily. Mn(2+) serves as cofactor. Expressed at higher level than GALNT9. In the developing hindbrain region of 14.5 dpc embryos it accumulates in the rapidly dividing, undifferentiated ventricular zone adjacent to the pons. It also accumulates in the regions immediately rostral and caudal to the dorsal rhombic lips differentiating into the cerebellum. Not expressed in the developing choroid plexus.

The protein localises to the golgi apparatus membrane. It catalyses the reaction L-seryl-[protein] + UDP-N-acetyl-alpha-D-galactosamine = a 3-O-[N-acetyl-alpha-D-galactosaminyl]-L-seryl-[protein] + UDP + H(+). The enzyme catalyses L-threonyl-[protein] + UDP-N-acetyl-alpha-D-galactosamine = a 3-O-[N-acetyl-alpha-D-galactosaminyl]-L-threonyl-[protein] + UDP + H(+). The protein operates within protein modification; protein glycosylation. Its function is as follows. Catalyzes the initial reaction in O-linked oligosaccharide biosynthesis, the transfer of an N-acetyl-D-galactosamine residue to a serine or threonine residue on the protein receptor. Has activity toward Muc5Ac and EA2 peptide substrates. This Mus musculus (Mouse) protein is Polypeptide N-acetylgalactosaminyltransferase 10 (Galnt10).